A 110-amino-acid polypeptide reads, in one-letter code: Nucleoid-associated protein YpAngola_A2890 (110 aa).

A disordered region spans residues 90 to 110; the sequence is KEKMASVSNGMQLPPGFKMPF.

Belongs to the YbaB/EbfC family. As to quaternary structure, homodimer.

The protein resides in the cytoplasm. It is found in the nucleoid. Its function is as follows. Binds to DNA and alters its conformation. May be involved in regulation of gene expression, nucleoid organization and DNA protection. The chain is Nucleoid-associated protein YpAngola_A2890 from Yersinia pestis bv. Antiqua (strain Angola).